A 48-amino-acid polypeptide reads, in one-letter code: Sperm protamine P1 (48 aa).

It belongs to the protamine P1 family. In terms of assembly, cross-linked by interchain disulfide bonds around the DNA-helix. As to expression, testis.

It localises to the nucleus. The protein resides in the chromosome. Functionally, protamines substitute for histones in the chromatin of sperm during the haploid phase of spermatogenesis. They compact sperm DNA into a highly condensed, stable and inactive complex. The chain is Sperm protamine P1 (PRM1) from Cavia porcellus (Guinea pig).